We begin with the raw amino-acid sequence, 707 residues long: Zinc finger CCHC domain-containing protein 8 (707 aa).

Position 2 is an N-acetylalanine (Ala-2). The segment at 16-44 (FDHPEESIPKPVHTRFKDDDGDEEDENGV) is disordered. Residues 34–43 (DDGDEEDENG) show a composition bias toward acidic residues. Residues 45 to 80 (GDAELRERLRQCEETIEQLRAENQELKRKLNILTRP) are a coiled coil. The segment at 227–244 (PHCFNCGSEEHQMKDCPM) adopts a CCHC-type zinc-finger fold. RBM7 binding stretches follow at residues 286 to 299 (FKPG…QDAL) and 309 to 324 (FIYR…GWLK). Phosphothreonine is present on Thr-342. Disordered regions lie at residues 409-518 (APGV…LTLE), 531-607 (LEQA…TSLC), and 641-660 (QKLF…HSPI). Residue Lys-413 forms a Glycyl lysine isopeptide (Lys-Gly) (interchain with G-Cter in SUMO2) linkage. Residues 456–465 (SQSSESFQFQ) show a composition bias toward low complexity. Residues 466-496 (PPLPPDTPPLPRGTPPPVFTPPLPKGTPPLT) are compositionally biased toward pro residues. Thr-472, Thr-479, and Thr-485 each carry phosphothreonine. Thr-492 carries the phosphothreonine; by GSK3 modification. Positions 516-539 (TLEELEEQQRRIWAALEQAESVNS) form a coiled coil. Polar residues predominate over residues 549 to 559 (LTGNSVASSPC). Phosphothreonine is present on Thr-577. Phosphoserine is present on Ser-598. Over residues 598–607 (SPDSEVTSLC) the composition is skewed to polar residues. Thr-648 carries the post-translational modification Phosphothreonine. 3 positions are modified to phosphoserine: Ser-649, Ser-658, and Ser-695. Positions 659–707 (PIPDMSKFATGITPFEFENMAESTGMYLRIRSLLKNSPRNQQKNKKASE) are MTREX binding.

This sequence belongs to the ZCCHC8 family. In terms of assembly, component of a nuclear TRAMP-like complex, an ATP-dependent exosome regulatory complex consisting of a helicase (MTREX), an oligadenylate polymerase (TENT4B or TENT4A), and a substrate specific RNA-binding factor (ZCCHC7 or ZCCHC8). Several TRAMP-like complexes exist with specific compositions and are associated with nuclear, or nucleolar RNA exosomes. Identified in the spliceosome C complex. Component of the nuclear exosome targeting (NEXT) complex composed of MTREX, ZCCHC8, and RBM7 that directs a subset of non-coding short-lived RNAs for exosomal degradation. Interacts with proteins involved in RNA processing and degradation such as MTREX and RBM7; interaction with MTREX enhances MTREX RNA helicase activity and bridges between RBM7 and MTREX. Interacts with TERC, the telomerase RNA component. Phosphorylation at Thr-492 by GSK3 is triggered in cells entering mitosis; this phosphorylation is greatly enhanced by nocodazole treatment, but reduced by lithium.

It localises to the nucleus. It is found in the nucleoplasm. Functionally, scaffolding subunit of the trimeric nuclear exosome targeting (NEXT) complex that is involved in the surveillance and turnover of aberrant transcripts and non-coding RNAs. NEXT functions as an RNA exosome cofactor that directs a subset of non-coding short-lived RNAs for exosomal degradation. May be involved in pre-mRNA splicing. It is required for 3'-end maturation of telomerase RNA component (TERC), TERC 3'-end targeting to the nuclear RNA exosome, and for telomerase function. The sequence is that of Zinc finger CCHC domain-containing protein 8 (ZCCHC8) from Homo sapiens (Human).